The sequence spans 144 residues: MPRSPAKTSPRKGSPRKGSPSRKASPKRGGKGAKRAGKGGRRRRVVKRRRRRRESYGIYIYKVLKQVHPDTGISSRAMSVMNSFVNDVFERIAGEASRLTSANRRSTVSSREIQTAVRLLLPGELAKHAVSEGTKAVTKYTTSR.

Residues 1-51 (MPRSPAKTSPRKGSPRKGSPSRKASPKRGGKGAKRAGKGGRRRRVVKRRRR) form a disordered region. 5 consecutive short sequence motifs (SPKK motif) follow at residues 4-7 (SPAK), 9-12 (SPRK), 14-17 (SPRK), 19-22 (SPSR), and 25-28 (SPKR). A phosphoserine mark is found at Ser-14, Ser-19, and Ser-25. Residues 24–51 (ASPKRGGKGAKRAGKGGRRRRVVKRRRR) show a composition bias toward basic residues. Ser-131 is a glycosylation site (O-linked (GlcNAc) serine). Residue Lys-139 forms a Glycyl lysine isopeptide (Lys-Gly) (interchain with G-Cter in ubiquitin) linkage.

This sequence belongs to the histone H2B family. In terms of assembly, the nucleosome is a histone octamer containing two molecules each of H2A, H2B, H3 and H4 assembled in one H3-H4 heterotetramer and two H2A-H2B heterodimers. The octamer wraps approximately 147 bp of DNA. Post-translationally, monoubiquitination of Lys-139 gives a specific tag for epigenetic transcriptional activation and is also prerequisite for histone H3 'Lys-4' and 'Lys-79' methylation. In terms of processing, phosphorylated on SPKK motifs 3, 4 and 5; which may regulate DNA binding. Dephosphorylated during maturation of spermatids to mature sperm and rephosphorylated at fertilization.

It localises to the nucleus. It is found in the chromosome. Functionally, core component of nucleosome. Nucleosomes wrap and compact DNA into chromatin, limiting DNA accessibility to the cellular machineries which require DNA as a template. Histones thereby play a central role in transcription regulation, DNA repair, DNA replication and chromosomal stability. DNA accessibility is regulated via a complex set of post-translational modifications of histones, also called histone code, and nucleosome remodeling. This Parechinus angulosus (Angulate sea urchin) protein is Histone H2B.2, sperm.